We begin with the raw amino-acid sequence, 171 residues long: 3-hydroxydecanoyl-[acyl-carrier-protein] dehydratase (171 aa).

The active site involves His70.

Belongs to the thioester dehydratase family. FabA subfamily. Homodimer.

The protein localises to the cytoplasm. It carries out the reaction a (3R)-hydroxyacyl-[ACP] = a (2E)-enoyl-[ACP] + H2O. The catalysed reaction is (3R)-hydroxydecanoyl-[ACP] = (2E)-decenoyl-[ACP] + H2O. It catalyses the reaction (2E)-decenoyl-[ACP] = (3Z)-decenoyl-[ACP]. It participates in lipid metabolism; fatty acid biosynthesis. Its function is as follows. Necessary for the introduction of cis unsaturation into fatty acids. Catalyzes the dehydration of (3R)-3-hydroxydecanoyl-ACP to E-(2)-decenoyl-ACP and then its isomerization to Z-(3)-decenoyl-ACP. Can catalyze the dehydratase reaction for beta-hydroxyacyl-ACPs with saturated chain lengths up to 16:0, being most active on intermediate chain length. The polypeptide is 3-hydroxydecanoyl-[acyl-carrier-protein] dehydratase (Pseudomonas syringae pv. syringae (strain B728a)).